Here is a 122-residue protein sequence, read N- to C-terminus: Large ribosomal subunit protein uL14 (122 aa).

Belongs to the universal ribosomal protein uL14 family. In terms of assembly, part of the 50S ribosomal subunit. Forms a cluster with proteins L3 and L19. In the 70S ribosome, L14 and L19 interact and together make contacts with the 16S rRNA in bridges B5 and B8.

Binds to 23S rRNA. Forms part of two intersubunit bridges in the 70S ribosome. This Lactobacillus delbrueckii subsp. bulgaricus (strain ATCC BAA-365 / Lb-18) protein is Large ribosomal subunit protein uL14.